Consider the following 172-residue polypeptide: Folate transporter FolT (172 aa).

The next 5 membrane-spanning stretches (helical) occupy residues 6 to 26 (VMIY…FLSI), 35 to 55 (FGFI…AGIV), 71 to 91 (AYFP…GVFF), 101 to 121 (VLLA…TIWL), and 131 to 151 (VLFV…AIVI).

Forms a stable energy-coupling factor (ECF) transporter complex composed of a membrane-embedded substrate-binding protein (S component), two ATP-binding proteins (A components) and a transmembrane protein (T component).

The protein localises to the cell membrane. In terms of biological role, folate-binding protein that interacts with the energy-coupling factor (ECF) ABC-transporter complex. Unlike classic ABC transporters this ECF transporter provides the energy necessary to transport a number of different substrates. The substrates themselves are bound by transmembrane, not extracytoplasmic soluble proteins. This is Folate transporter FolT (folT) from Clostridium novyi (strain NT).